The chain runs to 566 residues: E3 ubiquitin-protein ligase RNF220 (566 aa).

Residue lysine 277 forms a Glycyl lysine isopeptide (Lys-Gly) (interchain with G-Cter in SUMO2) linkage. The interval 277 to 297 (KREGESPTASPHSSATDDLHH) is disordered. Serine 390 carries the phosphoserine modification. The stretch at 485-513 (EDSAVTTFEALKARVRELERQLSRGDRYK) forms a coiled coil. A required for targeting to the cytoplasm region spans residues 514-522 (CLICMDSYS). An RING-type zinc finger spans residues 514–553 (CLICMDSYSMPLTSIQCWHVHCEECWLRTLGAKKLCPQCY).

As to quaternary structure, interacts with SIN3B. Interacts with CTNNB1 (via Armadillo repeats 2-8). Interacts with USP7 (via MATH domain). Post-translationally, auto-ubiquitinated; leads to proteasomal degradation.

It is found in the cytoplasm. The catalysed reaction is S-ubiquitinyl-[E2 ubiquitin-conjugating enzyme]-L-cysteine + [acceptor protein]-L-lysine = [E2 ubiquitin-conjugating enzyme]-L-cysteine + N(6)-ubiquitinyl-[acceptor protein]-L-lysine.. It participates in protein modification; protein ubiquitination. E3 ubiquitin-protein ligase that promotes the ubiquitination and proteasomal degradation of SIN3B. Independently of its E3 ligase activity, acts as a CTNNB1 stabilizer through USP7-mediated deubiquitination of CTNNB1 promoting Wnt signaling. The polypeptide is E3 ubiquitin-protein ligase RNF220 (RNF220) (Bos taurus (Bovine)).